A 210-amino-acid polypeptide reads, in one-letter code: Small ribosomal subunit protein uS7 (210 aa).

Residues 1-22 (MSDEQPAEDETEEAAAESEDTQ) show a composition bias toward acidic residues. The interval 1-23 (MSDEQPAEDETEEAAAESEDTQE) is disordered.

Belongs to the universal ribosomal protein uS7 family. As to quaternary structure, part of the 30S ribosomal subunit. Contacts proteins S9 and S11.

Its function is as follows. One of the primary rRNA binding proteins, it binds directly to 16S rRNA where it nucleates assembly of the head domain of the 30S subunit. Is located at the subunit interface close to the decoding center. This chain is Small ribosomal subunit protein uS7, found in Halobacterium salinarum (strain ATCC 29341 / DSM 671 / R1).